Consider the following 171-residue polypeptide: Transcription elongation factor GreB (171 aa).

Residues 53–75 (KKRLREIDRRVRFLAKRLEVLKI) adopt a coiled-coil conformation.

This sequence belongs to the GreA/GreB family. GreB subfamily.

In terms of biological role, necessary for efficient RNA polymerase transcription elongation past template-encoded arresting sites. The arresting sites in DNA have the property of trapping a certain fraction of elongating RNA polymerases that pass through, resulting in locked ternary complexes. Cleavage of the nascent transcript by cleavage factors such as GreA or GreB allows the resumption of elongation from the new 3'terminus. GreB releases sequences of up to 9 nucleotides in length. This is Transcription elongation factor GreB from Yersinia pestis.